Here is a 517-residue protein sequence, read N- to C-terminus: Cytochrome P450 CYP72A616 (517 aa).

Residues 5–25 (VLGALAALLAAAAAWVMRAAA) form a helical membrane-spanning segment. Cys-465 contacts heme.

Belongs to the cytochrome P450 family. Mainly expressed in leaves and, at low levels, in roots, fruits and stems.

The protein resides in the membrane. It participates in steroid metabolism; cholesterol metabolism. Involved in the biosynthesis of spiroketal steroid and saponin natural products from cholesterol such as diosgenin and analogs (e.g. furostanol and spirostanol), plant defense compounds used as main precursors for the industrial production of steroid hormones. During the 5,6-spiroketalization of cholesterol, may catalyze the 27-monohydroxylation of furostanol-type steroid to an intermediate product that undergoes a stereospecific formation of the terminal heterocycle to yield diosgenin. This is Cytochrome P450 CYP72A616 from Paris polyphylla (Daiswa polyphylla).